The following is a 329-amino-acid chain: MQTILTDQASFNILTSKRNLINKLTITNIVLWALFVFCAIATAFLAISHSFHKNFSFFLESGNSNNEGETTTKVNIHVLVAQILTPIFTVLLILCWMGNIGINSLLFGQLSICQQFQNEKKWLLWAIFIPQLTLTNSLLVREKLKNILDANSNSSTQKNRLTWWMIGFFVVWFIQLFLGFLIYLPAYSAEARLNLNLSFLSFALNSPLPVGHAANGYFFLGLIFAFMDLTIIVLLVISGFILKHLIQTNKTEHKKYQLMFFWTALAIDVIGLIMTISFIVVSFSLEKGDDYLLKTPFFGSSLMALITIATLVTTILLFIRFNKKRLLKD.

7 helical membrane-spanning segments follow: residues 29-49 (IVLW…AISH), 78-98 (VLVA…CWMG), 120-140 (KKWL…SLLV), 164-184 (WMIG…LIYL), 217-237 (YFFL…LLVI), 260-280 (FFWT…SFIV), and 299-319 (GSSL…LLFI).

This sequence to M.pneumoniae MPN_129.

It is found in the cell membrane. This is an uncharacterized protein from Mycoplasma pneumoniae (strain ATCC 29342 / M129 / Subtype 1) (Mycoplasmoides pneumoniae).